The sequence spans 181 residues: Large ribosomal subunit protein uL6 (181 aa).

This sequence belongs to the universal ribosomal protein uL6 family. In terms of assembly, part of the 50S ribosomal subunit.

Its function is as follows. This protein binds to the 23S rRNA, and is important in its secondary structure. It is located near the subunit interface in the base of the L7/L12 stalk, and near the tRNA binding site of the peptidyltransferase center. This Rhodopirellula baltica (strain DSM 10527 / NCIMB 13988 / SH1) protein is Large ribosomal subunit protein uL6.